The following is a 433-amino-acid chain: Succinate--CoA ligase [ADP-forming] subunit beta, mitochondrial (433 aa).

The N-terminal 23 residues, 1 to 23, are a transit peptide targeting the mitochondrion; the sequence is MLTRSVLRKAPRAFSPFLQKRNL. Positions 31-273 constitute an ATP-grasp domain; sequence HDILRKFGVD…ISQEDPDEAR (243 aa). ATP is bound by residues Lys68, 75-77, and Glu136; that span reads GRG. The Mg(2+) site is built by Asn228 and Asp242. Substrate is bound by residues Asn293 and 350-352; that span reads GIV.

Belongs to the succinate/malate CoA ligase beta subunit family. Heterodimer of an alpha and a beta subunit. Mg(2+) is required as a cofactor.

It is found in the mitochondrion. It catalyses the reaction succinate + ATP + CoA = succinyl-CoA + ADP + phosphate. The protein operates within carbohydrate metabolism; tricarboxylic acid cycle; succinate from succinyl-CoA (ligase route): step 1/1. Functionally, succinyl-CoA synthetase functions in the citric acid cycle (TCA), coupling the hydrolysis of succinyl-CoA to the synthesis of ATP and thus represents the only step of substrate-level phosphorylation in the TCA. The beta subunit provides nucleotide specificity of the enzyme and binds the substrate succinate, while the binding sites for coenzyme A and phosphate are found in the alpha subunit. This chain is Succinate--CoA ligase [ADP-forming] subunit beta, mitochondrial, found in Schizosaccharomyces pombe (strain 972 / ATCC 24843) (Fission yeast).